A 93-amino-acid polypeptide reads, in one-letter code: Small integral membrane protein 36 (93 aa).

Residues 14-34 (LIILVASYVILLLVFLISCVL) form a helical membrane-spanning segment. A disordered region spans residues 73–93 (PKGPGLSLGDPAPLGKKSTMV).

Its subcellular location is the membrane. The chain is Small integral membrane protein 36 from Homo sapiens (Human).